Reading from the N-terminus, the 245-residue chain is 2,3,4,5-tetrahydropyridine-2,6-dicarboxylate N-acetyltransferase (245 aa).

It belongs to the transferase hexapeptide repeat family. DapH subfamily.

It catalyses the reaction (S)-2,3,4,5-tetrahydrodipicolinate + acetyl-CoA + H2O = L-2-acetamido-6-oxoheptanedioate + CoA. It participates in amino-acid biosynthesis; L-lysine biosynthesis via DAP pathway; LL-2,6-diaminopimelate from (S)-tetrahydrodipicolinate (acetylase route): step 1/3. In terms of biological role, catalyzes the transfer of an acetyl group from acetyl-CoA to tetrahydrodipicolinate. The protein is 2,3,4,5-tetrahydropyridine-2,6-dicarboxylate N-acetyltransferase of Methanopyrus kandleri (strain AV19 / DSM 6324 / JCM 9639 / NBRC 100938).